The chain runs to 602 residues: uncharacterized protein (602 aa).

It belongs to the IIV-6 098R family.

This is an uncharacterized protein from Acheta domesticus (House cricket).